The primary structure comprises 315 residues: Methionyl-tRNA formyltransferase (315 aa).

111–114 (SLLP) lines the (6S)-5,6,7,8-tetrahydrofolate pocket.

It belongs to the Fmt family.

The catalysed reaction is L-methionyl-tRNA(fMet) + (6R)-10-formyltetrahydrofolate = N-formyl-L-methionyl-tRNA(fMet) + (6S)-5,6,7,8-tetrahydrofolate + H(+). In terms of biological role, attaches a formyl group to the free amino group of methionyl-tRNA(fMet). The formyl group appears to play a dual role in the initiator identity of N-formylmethionyl-tRNA by promoting its recognition by IF2 and preventing the misappropriation of this tRNA by the elongation apparatus. This chain is Methionyl-tRNA formyltransferase, found in Chlorobium phaeobacteroides (strain DSM 266 / SMG 266 / 2430).